The chain runs to 188 residues: Elongation factor P-like protein (188 aa).

This sequence belongs to the elongation factor P family.

The sequence is that of Elongation factor P-like protein from Alcanivorax borkumensis (strain ATCC 700651 / DSM 11573 / NCIMB 13689 / SK2).